Consider the following 613-residue polypeptide: Dihydroxy-acid dehydratase (613 aa).

Asp-81 serves as a coordination point for Mg(2+). Cys-122 contributes to the [2Fe-2S] cluster binding site. The Mg(2+) site is built by Asp-123 and Lys-124. Position 124 is an N6-carboxylysine (Lys-124). Cys-195 is a binding site for [2Fe-2S] cluster. Glu-491 is a binding site for Mg(2+). Ser-517 acts as the Proton acceptor in catalysis.

It belongs to the IlvD/Edd family. Homodimer. It depends on [2Fe-2S] cluster as a cofactor. Mg(2+) serves as cofactor.

It carries out the reaction (2R)-2,3-dihydroxy-3-methylbutanoate = 3-methyl-2-oxobutanoate + H2O. It catalyses the reaction (2R,3R)-2,3-dihydroxy-3-methylpentanoate = (S)-3-methyl-2-oxopentanoate + H2O. It functions in the pathway amino-acid biosynthesis; L-isoleucine biosynthesis; L-isoleucine from 2-oxobutanoate: step 3/4. The protein operates within amino-acid biosynthesis; L-valine biosynthesis; L-valine from pyruvate: step 3/4. Its function is as follows. Functions in the biosynthesis of branched-chain amino acids. Catalyzes the dehydration of (2R,3R)-2,3-dihydroxy-3-methylpentanoate (2,3-dihydroxy-3-methylvalerate) into 2-oxo-3-methylpentanoate (2-oxo-3-methylvalerate) and of (2R)-2,3-dihydroxy-3-methylbutanoate (2,3-dihydroxyisovalerate) into 2-oxo-3-methylbutanoate (2-oxoisovalerate), the penultimate precursor to L-isoleucine and L-valine, respectively. The sequence is that of Dihydroxy-acid dehydratase from Buchnera aphidicola subsp. Schlechtendalia chinensis.